The chain runs to 586 residues: MIIVNNTLAFKLKNAPHKPGCYLWKDDAGQVLYVGKAKDIFKRVHHYFNPNRSFKTRALVERIADVEYVILKNENDALNLEAKLIKQYKPRFNLVLKENNGYLYFFITASVKPTLELGRRYEFSKNKYFGPFASSKFRLRDIYDLLLKLFPLRKCAPHERGHPCFYYQLKMCMGQCMGEDTPERYQTTVKGIEQFFNHGPEQVLNHLQQQEIKASEQQNFEAARHFLDLQKAVLELVNMQQTAFIKAKQSHDFIGYVFEKNVLAITVFAYVDNQLIGKNQQVFELPQDDEKEVESALVTFIYHYYSTNKIPKTLTVSLSEENLSLLANSLKINVTQPKNGEQKSILQTVIDNARYALNTKWTGFINNLNRAEVHQQLAQLLQVPSIQSLEIIDISFYDKDHVVGAMLRYENGKRMKALSRRYNINIDHKGDTNYMADVVYRRIISSIQTHKQLPLSDLLIVDGGIAQINTVTKVFASFPNVTQPIIIGLAKNTRHQTDHIVLTDNTTINIDKNTPLFAYLTTIQEEVDSFAKHNAFKRVSRARFQNPLLQIEGVGRKTVQILLDNFQTNAKHWSCFFERIITVYSC.

In terms of domain architecture, GIY-YIG spans 17 to 94 (HKPGCYLWKD…IKQYKPRFNL (78 aa)). The region spanning 201-236 (EQVLNHLQQQEIKASEQQNFEAARHFLDLQKAVLEL) is the UVR domain.

The protein belongs to the UvrC family. Interacts with UvrB in an incision complex.

The protein localises to the cytoplasm. Its function is as follows. The UvrABC repair system catalyzes the recognition and processing of DNA lesions. UvrC both incises the 5' and 3' sides of the lesion. The N-terminal half is responsible for the 3' incision and the C-terminal half is responsible for the 5' incision. The protein is UvrABC system protein C of Mycoplasma pneumoniae (strain ATCC 29342 / M129 / Subtype 1) (Mycoplasmoides pneumoniae).